Reading from the N-terminus, the 319-residue chain is D-alanine--D-alanine ligase (319 aa).

Residues 109–313 (KRVWLAEGLP…YEQLCLHILQ (205 aa)) enclose the ATP-grasp domain. 139–194 (PDDLGLPLIVKPPREGSSIGVTKVLGYSQMQDAVALSARHDPDVLCEEFIDGAEVT) contributes to the ATP binding site. 3 residues coordinate Mg(2+): D266, E280, and N282.

Belongs to the D-alanine--D-alanine ligase family. The cofactor is Mg(2+). Mn(2+) serves as cofactor.

The protein localises to the cytoplasm. The catalysed reaction is 2 D-alanine + ATP = D-alanyl-D-alanine + ADP + phosphate + H(+). The protein operates within cell wall biogenesis; peptidoglycan biosynthesis. In terms of biological role, cell wall formation. This Methylibium petroleiphilum (strain ATCC BAA-1232 / LMG 22953 / PM1) protein is D-alanine--D-alanine ligase.